The sequence spans 668 residues: Kelch repeat-containing protein ARB_01230 (668 aa).

Positions 1–32 are cleaved as a signal peptide; it reads MEVGRFASKSASMTYLLLVLLVGFILPQQGQH. At 33–522 the chain is on the extracellular side; it reads AHARTLARRD…GSGSDGPNIA (490 aa). A glycan (N-linked (GlcNAc...) asparagine) is linked at Asn60. Kelch repeat units lie at residues 62–108 and 125–176; these read TLYI…PRGD and SLFL…ANIP. Residues Asn251 and Asn291 are each glycosylated (N-linked (GlcNAc...) asparagine). Kelch repeat units follow at residues 283 to 331, 340 to 395, 396 to 445, and 463 to 509; these read ILGL…AVAA, QVYL…IWNS, QIVV…ASQT, and VQSV…GPHA. Residues 523–543 form a helical membrane-spanning segment; it reads AIVAGVIAGCLGVLAIYLGFV. The Cytoplasmic segment spans residues 544-668; that stretch reads TWLYRRRLAI…PRQTLRVINQ (125 aa). Residues 611–642 are disordered; that stretch reads DNQRHNHTRSSSGGNFDHLAQPERPSTSSSVE.

It localises to the membrane. Its subcellular location is the secreted. The protein is Kelch repeat-containing protein ARB_01230 of Arthroderma benhamiae (strain ATCC MYA-4681 / CBS 112371) (Trichophyton mentagrophytes).